Reading from the N-terminus, the 421-residue chain is Protein ECERIFERUM 2 (421 aa).

Residue Met1 is modified to N-acetylmethionine.

This sequence belongs to the plant acyltransferase family. In terms of tissue distribution, expressed at high levels in the epidermis of stems and young siliques. Expressed in flowers.

It is found in the endoplasmic reticulum. Its subcellular location is the nucleus. Its function is as follows. Involved in biosynthesis of the epicuticular wax. Plays a role in very-long-chain fatty acid (VLCFA) biosynthesis and is required for C28 fatty acid elongation in stem. Despite its classification as a BAHD acyltransferase based on sequence homology, CER2 does not seem to share the catalytic mechanism of the members of the BAHD family. The polypeptide is Protein ECERIFERUM 2 (CER2) (Arabidopsis thaliana (Mouse-ear cress)).